The sequence spans 737 residues: NAD-dependent protein deacetylase sirtuin-1 (737 aa).

Residues 1–28 (MADEVALALQAAGSPSAAAAMEAASQPA) are compositionally biased toward low complexity. Disordered regions lie at residues 1 to 56 (MADE…AVAP) and 75 to 125 (EAAG…EAAA). Residue A2 is modified to N-acetylalanine. The interval 2–131 (ADEVALALQA…EAAAAAAAAA (130 aa)) is interaction with CLOCK. Residues 2 to 268 (ADEVALALQA…SCGIPDFRSR (267 aa)) are interaction with H1-4. 2 positions are modified to phosphoserine: S14 and S25. Residues 32-39 (LRKRPRRD) carry the Nuclear localization signal motif. Residue S46 is modified to Phosphoserine; by MAPK8. 2 stretches are compositionally biased toward low complexity: residues 46-56 (SPGEPSAAVAP) and 75-94 (EAAG…AVAG). A compositionally biased stretch (acidic residues) spans 111-123 (DFDDDEGEEEDEA). An interaction with CCAR2 region spans residues 135 to 533 (RDNLLLTDGL…LHISEDSSSP (399 aa)). Residues 138–145 (LLLTDGLL) carry the Nuclear export signal motif. Phosphoserine is present on residues S151, S154, S164, and S165. The interval 152–171 (CESDDDDRTSHASSSDWTPR) is disordered. A Nuclear localization signal motif is present at residues 223-230 (PPKRKKRK). In terms of domain architecture, Deacetylase sirtuin-type spans 228 to 488 (KRKDINTIED…NELCHRLGGE (261 aa)). The residue at position 230 (K230) is an N6-acetyllysine. The tract at residues 248–251 (IIVL) is required for interaction with the sumoylated form of CCAR2. Residues 253-272 (GAGV…DGIY) and 337-340 (QNID) each bind NAD(+). H355 acts as the Proton acceptor in catalysis. Residues C363 and C366 each coordinate Zn(2+). An N6-acetyllysine modification is found at K369. C387 and C390 together coordinate Zn(2+). C387 and C390 each carry S-nitrosocysteine. K422 bears the N6-acetyllysine mark. Residues 425–431 (VDLLIVI) carry the Nuclear export signal motif. Residues 432 to 434 (GSS), 457 to 459 (NRE), and C474 each bind NAD(+). K505 is subject to N6-acetyllysine. The segment at 514–539 (VHLSELPPTPLHISEDSSSPERTVPQ) is disordered. Phosphothreonine; by DYRK1A, DYRK3 and MAPK8 is present on T522. The residue at position 527 (S527) is a Phosphoserine. Residues 529 to 539 (DSSSPERTVPQ) show a composition bias toward polar residues. The residue at position 536 (T536) is a Phosphothreonine. K600 carries the post-translational modification N6-acetyllysine. Phosphoserine; by CaMK2 occurs at positions 649 and 651. The disordered stretch occupies residues 653–713 (DDVLSSSSCG…GSGFGADGGD (61 aa)). Residues 656-676 (LSSSSCGSNSDSGTCQSPSLE) show a composition bias toward low complexity. Acidic residues predominate over residues 677–697 (EPLEDESEIEEFYNGLEDDTE). The residue at position 737 (S737) is a Phosphoserine.

The protein belongs to the sirtuin family. Class I subfamily. In terms of assembly, interacts with XBP1 isoform 2. Found in a complex with PCAF and MYOD1 Component of the eNoSC complex, composed of SIRT1, SUV39H1 and RRP8. Interacts with HES1, HEY2 and PML. Interacts with RPS19BP1/AROS. Interacts with CCAR2 (via N-terminus); the interaction disrupts the interaction between SIRT1 and p53/TP53. Interacts with SETD7; the interaction induces the dissociation of SIRT1 from p53/TP53 and increases p53/TP53 activity. Interacts with MYCN, NR1I2, CREBZF, TSC2, TLE1, FOS, JUN, NR0B2, PPARG, NCOR, IRS1, IRS2 and NMNAT1. Interacts with HNF1A; the interaction occurs under nutrient restriction. Interacts with SUZ12; the interaction mediates the association with the PRC4 histone methylation complex which is specific as an association with PCR2 and PCR3 complex variants is not found. Interacts with FOXO1; the interaction deacetylates FOXO1, enhances its DNA-binding ability and increases its transcriptional activity. Interacts with BCL6; leads to a epigenetic repression of specific target genes. Interacts with CLOCK, BMAL1 and PER2. Interacts with PPARA; the interaction seems to be modulated by NAD(+) levels. Interacts with NR1H3 and this interaction is inhibited in the presence of CCAR2. Interacts with CHEK2 and p53/TP53. Exhibits a preferential interaction with sumoylated CCAR2 over its unmodified form. Interacts with PACS2. Interacts with SIRT7. Interacts with PUS7. Interacts with TULP3. Interacts with MORN3; the interaction enhances the ubiquitination of p53/TP53. Zn(2+) is required as a cofactor. Methylated on multiple lysine residues; methylation is enhanced after DNA damage and is dispensable for deacetylase activity toward p53/TP53. Post-translationally, phosphorylated. Phosphorylated by STK4/MST1, resulting in inhibition of SIRT1-mediated p53/TP53 deacetylation. Phosphorylation by MAPK8/JNK1 at Ser-46 and Thr-522 leads to increased nuclear localization and enzymatic activity. Phosphorylation at Thr-522 by DYRK1A and DYRK3 activates deacetylase activity and promotes cell survival. Phosphorylation by mammalian target of rapamycin complex 1 (mTORC1) at Ser-46 inhibits deacetylation activity. Phosphorylated by CaMK2, leading to increased p53/TP53 and NF-kappa-B p65/RELA deacetylation activity. In terms of processing, proteolytically cleaved by cathepsin B upon TNF-alpha treatment to yield catalytic inactive but stable SirtT1 75 kDa fragment (75SirT1). S-nitrosylated by GAPDH, leading to inhibit the NAD-dependent protein deacetylase activity. Post-translationally, acetylated at various Lys residues. Deacetylated via an autocatalytic mechanism. Autodeacetylation at Lys-230 promotes its protein deacetylase activity. In terms of processing, ubiquitinated; leading to degradation. Deubiquitinated by USP22; leading to stabilization. As to expression, widely expressed. Weakly expressed in liver and skeletal muscle.

The protein resides in the nucleus. The protein localises to the PML body. Its subcellular location is the cytoplasm. It is found in the mitochondrion. It catalyses the reaction N(6)-acetyl-L-lysyl-[protein] + NAD(+) + H2O = 2''-O-acetyl-ADP-D-ribose + nicotinamide + L-lysyl-[protein]. The enzyme catalyses N(6)-propanoyl-L-lysyl-[protein] + NAD(+) + H2O = 3''-O-propanoyl-ADP-D-ribose + nicotinamide + L-lysyl-[protein]. The catalysed reaction is N(6)-(2E)-butenoyl-L-lysyl-[protein] + NAD(+) + H2O = 2''-O-(2E)-but-2-enoyl-ADP-D-ribose + nicotinamide + L-lysyl-[protein]. It carries out the reaction N(6)-[(S)-lactoyl]-L-lysyl-[protein] + NAD(+) + H2O = 2''-O-(S)-lactoyl-ADP-D-ribose + nicotinamide + L-lysyl-[protein]. Its activity is regulated as follows. Activated by resveratrol (3,5,4'-trihydroxy-trans-stilbene), butein (3,4,2',4'-tetrahydroxychalcone), piceatannol (3,5,3',4'-tetrahydroxy-trans-stilbene), Isoliquiritigenin (4,2',4'-trihydroxychalcone), fisetin (3,7,3',4'-tetrahydroxyflavone) and quercetin (3,5,7,3',4'-pentahydroxyflavone). MAPK8/JNK1 and RPS19BP1/AROS act as positive regulators of deacetylation activity. Inhibited by nicotinamide. Negatively regulated by CCAR2. Functionally, NAD-dependent protein deacetylase that links transcriptional regulation directly to intracellular energetics and participates in the coordination of several separated cellular functions such as cell cycle, response to DNA damage, metabolism, apoptosis and autophagy. Can modulate chromatin function through deacetylation of histones and can promote alterations in the methylation of histones and DNA, leading to transcriptional repression. Deacetylates a broad range of transcription factors and coregulators, thereby regulating target gene expression positively and negatively. Serves as a sensor of the cytosolic ratio of NAD(+)/NADH which is altered by glucose deprivation and metabolic changes associated with caloric restriction. Is essential in skeletal muscle cell differentiation and in response to low nutrients mediates the inhibitory effect on skeletal myoblast differentiation which also involves 5'-AMP-activated protein kinase (AMPK) and nicotinamide phosphoribosyltransferase (NAMPT). Component of the eNoSC (energy-dependent nucleolar silencing) complex, a complex that mediates silencing of rDNA in response to intracellular energy status and acts by recruiting histone-modifying enzymes. The eNoSC complex is able to sense the energy status of cell: upon glucose starvation, elevation of NAD(+)/NADP(+) ratio activates SIRT1, leading to histone H3 deacetylation followed by dimethylation of H3 at 'Lys-9' (H3K9me2) by SUV39H1 and the formation of silent chromatin in the rDNA locus. Deacetylates 'Lys-266' of SUV39H1, leading to its activation. Inhibits skeletal muscle differentiation by deacetylating PCAF and MYOD1. Deacetylates H2A and 'Lys-26' of H1-4. Deacetylates 'Lys-16' of histone H4 (in vitro). Involved in NR0B2/SHP corepression function through chromatin remodeling: Recruited to LRH1 target gene promoters by NR0B2/SHP thereby stimulating histone H3 and H4 deacetylation leading to transcriptional repression. Proposed to contribute to genomic integrity via positive regulation of telomere length; however, reports on localization to pericentromeric heterochromatin are conflicting. Proposed to play a role in constitutive heterochromatin (CH) formation and/or maintenance through regulation of the available pool of nuclear SUV39H1. Upon oxidative/metabolic stress decreases SUV39H1 degradation by inhibiting SUV39H1 polyubiquitination by MDM2. This increase in SUV39H1 levels enhances SUV39H1 turnover in CH, which in turn seems to accelerate renewal of the heterochromatin which correlates with greater genomic integrity during stress response. Deacetylates 'Lys-382' of p53/TP53 and impairs its ability to induce transcription-dependent proapoptotic program and modulate cell senescence. Deacetylates TAF1B and thereby represses rDNA transcription by the RNA polymerase I. Deacetylates MYC, promotes the association of MYC with MAX and decreases MYC stability leading to compromised transformational capability. Deacetylates FOXO3 in response to oxidative stress thereby increasing its ability to induce cell cycle arrest and resistance to oxidative stress but inhibiting FOXO3-mediated induction of apoptosis transcriptional activity; also leading to FOXO3 ubiquitination and protesomal degradation. Appears to have a similar effect on MLLT7/FOXO4 in regulation of transcriptional activity and apoptosis. Deacetylates DNMT1; thereby impairs DNMT1 methyltransferase-independent transcription repressor activity, modulates DNMT1 cell cycle regulatory function and DNMT1-mediated gene silencing. Deacetylates RELA/NF-kappa-B p65 thereby inhibiting its transactivating potential and augments apoptosis in response to TNF-alpha. Deacetylates HIF1A, KAT5/TIP60, RB1 and HIC1. Deacetylates FOXO1, which increases its DNA binding ability and enhances its transcriptional activity leading to increased gluconeogenesis in liver. Inhibits E2F1 transcriptional activity and apoptotic function, possibly by deacetylation. Involved in HES1- and HEY2-mediated transcriptional repression. In cooperation with MYCN seems to be involved in transcriptional repression of DUSP6/MAPK3 leading to MYCN stabilization by phosphorylation at 'Ser-62'. Deacetylates MEF2D. Required for antagonist-mediated transcription suppression of AR-dependent genes which may be linked to local deacetylation of histone H3. Represses HNF1A-mediated transcription. Required for the repression of ESRRG by CREBZF. Deacetylates NR1H3 and NR1H2 and deacetylation of NR1H3 at 'Lys-434' positively regulates transcription of NR1H3:RXR target genes, promotes NR1H3 proteasomal degradation and results in cholesterol efflux; a promoter clearing mechanism after reach round of transcription is proposed. Involved in lipid metabolism: deacetylates LPIN1, thereby inhibiting diacylglycerol synthesis. Implicated in regulation of adipogenesis and fat mobilization in white adipocytes by repression of PPARG which probably involves association with NCOR1 and SMRT/NCOR2. Deacetylates p300/EP300 and PRMT1. Deacetylates ACSS2 leading to its activation, and HMGCS1 deacetylation. Involved in liver and muscle metabolism. Through deacetylation and activation of PPARGC1A is required to activate fatty acid oxidation in skeletal muscle under low-glucose conditions and is involved in glucose homeostasis. Involved in regulation of PPARA and fatty acid beta-oxidation in liver. Involved in positive regulation of insulin secretion in pancreatic beta cells in response to glucose; the function seems to imply transcriptional repression of UCP2. Proposed to deacetylate IRS2 thereby facilitating its insulin-induced tyrosine phosphorylation. Deacetylates SREBF1 isoform SREBP-1C thereby decreasing its stability and transactivation in lipogenic gene expression. Involved in DNA damage response by repressing genes which are involved in DNA repair, such as XPC and TP73, deacetylating XRCC6/Ku70, and facilitating recruitment of additional factors to sites of damaged DNA, such as SIRT1-deacetylated NBN can recruit ATM to initiate DNA repair and SIRT1-deacetylated XPA interacts with RPA2. Also involved in DNA repair of DNA double-strand breaks by homologous recombination and specifically single-strand annealing independently of XRCC6/Ku70 and NBN. Promotes DNA double-strand breaks by mediating deacetylation of SIRT6. Transcriptional suppression of XPC probably involves an E2F4:RBL2 suppressor complex and protein kinase B (AKT) signaling. Transcriptional suppression of TP73 probably involves E2F4 and PCAF. Deacetylates WRN thereby regulating its helicase and exonuclease activities and regulates WRN nuclear translocation in response to DNA damage. Deacetylates APEX1 at 'Lys-6' and 'Lys-7' and stimulates cellular AP endonuclease activity by promoting the association of APEX1 to XRCC1. Catalyzes deacetylation of ERCC4/XPF, thereby impairing interaction with ERCC1 and nucleotide excision repair (NER). Increases p53/TP53-mediated transcription-independent apoptosis by blocking nuclear translocation of cytoplasmic p53/TP53 and probably redirecting it to mitochondria. Deacetylates XRCC6/Ku70 at 'Lys-537' and 'Lys-540' causing it to sequester BAX away from mitochondria thereby inhibiting stress-induced apoptosis. Is involved in autophagy, presumably by deacetylating ATG5, ATG7 and MAP1LC3B/ATG8. Deacetylates AKT1 which leads to enhanced binding of AKT1 and PDK1 to PIP3 and promotes their activation. Proposed to play role in regulation of STK11/LBK1-dependent AMPK signaling pathways implicated in cellular senescence which seems to involve the regulation of the acetylation status of STK11/LBK1. Can deacetylate STK11/LBK1 and thereby increase its activity, cytoplasmic localization and association with STRAD; however, the relevance of such activity in normal cells is unclear. In endothelial cells is shown to inhibit STK11/LBK1 activity and to promote its degradation. Deacetylates SMAD7 at 'Lys-64' and 'Lys-70' thereby promoting its degradation. Deacetylates CIITA and augments its MHC class II transactivation and contributes to its stability. Deacetylates MECOM/EVI1. Deacetylates PML at 'Lys-487' and this deacetylation promotes PML control of PER2 nuclear localization. During the neurogenic transition, represses selective NOTCH1-target genes through histone deacetylation in a BCL6-dependent manner and leading to neuronal differentiation. Regulates the circadian expression of several core clock genes, including BMAL1, RORC, PER2 and CRY1 and plays a critical role in maintaining a controlled rhythmicity in histone acetylation, thereby contributing to circadian chromatin remodeling. Deacetylates BMAL1 and histones at the circadian gene promoters in order to facilitate repression by inhibitory components of the circadian oscillator. Deacetylates PER2, facilitating its ubiquitination and degradation by the proteasome. Protects cardiomyocytes against palmitate-induced apoptosis. Deacetylates XBP1 isoform 2; deacetylation decreases protein stability of XBP1 isoform 2 and inhibits its transcriptional activity. Deacetylates PCK1 and directs its activity toward phosphoenolpyruvate production promoting gluconeogenesis. Involved in the CCAR2-mediated regulation of PCK1 and NR1D1. Deacetylates CTNB1 at 'Lys-49'. In POMC (pro-opiomelanocortin) neurons, required for leptin-induced activation of PI3K signaling. Deacetylates SOX9; promoting SOX9 nuclear localization and transactivation activity. Involved in the regulation of centrosome duplication: Deacetylates CENATAC in G1 phase, allowing for SASS6 accumulation on the centrosome and subsequent procentriole assembly. Deacetylates NDC80/HEC1. In addition to protein deacetylase activity, also acts as a protein-lysine deacylase by mediating protein delactylation, depropionylation and decrotonylation. Mediates depropionylation of Osterix (SP7). Catalyzes decrotonylation of histones; it however does not represent a major histone decrotonylase. Mediates protein delactylation of TEAD1 and YAP1. Deacetylates 'Lys-382' of p53/TP53, however with lower activity than isoform 1. In combination, the two isoforms exert an additive effect. Isoform 2 regulates p53/TP53 expression and cellular stress response and is in turn repressed by p53/TP53 presenting a SIRT1 isoform-dependent auto-regulatory loop. Its function is as follows. Catalytically inactive 75SirT1 may be involved in regulation of apoptosis. May be involved in protecting chondrocytes from apoptotic death by associating with cytochrome C and interfering with apoptosome assembly. The chain is NAD-dependent protein deacetylase sirtuin-1 (Sirt1) from Mus musculus (Mouse).